A 102-amino-acid chain; its full sequence is MGKQKIRIRLKAFDHRILDQSSEKIVETAKRTGAAVSGPIPLPTEKSIYTILRSPHVNKDSREQFEMRTHKRLIDILEPNPKTVDALMRLDLPAGVDIEIKL.

This sequence belongs to the universal ribosomal protein uS10 family. In terms of assembly, part of the 30S ribosomal subunit.

In terms of biological role, involved in the binding of tRNA to the ribosomes. This Heliobacterium modesticaldum (strain ATCC 51547 / Ice1) protein is Small ribosomal subunit protein uS10.